Here is a 205-residue protein sequence, read N- to C-terminus: Dephospho-CoA kinase (205 aa).

Positions 6–205 constitute a DPCK domain; the sequence is RIGLTGGIAA…EIYAGWCAGR (200 aa). ATP is bound at residue 14–19; sequence AAGKST.

This sequence belongs to the CoaE family.

It is found in the cytoplasm. The enzyme catalyses 3'-dephospho-CoA + ATP = ADP + CoA + H(+). It participates in cofactor biosynthesis; coenzyme A biosynthesis; CoA from (R)-pantothenate: step 5/5. Its function is as follows. Catalyzes the phosphorylation of the 3'-hydroxyl group of dephosphocoenzyme A to form coenzyme A. In Bifidobacterium longum (strain NCC 2705), this protein is Dephospho-CoA kinase.